A 497-amino-acid polypeptide reads, in one-letter code: Probable cytosol aminopeptidase (497 aa).

Positions 265 and 270 each coordinate Mn(2+). Lysine 277 is a catalytic residue. Positions 288, 347, and 349 each coordinate Mn(2+). Arginine 351 is a catalytic residue.

It belongs to the peptidase M17 family. Mn(2+) is required as a cofactor.

It localises to the cytoplasm. It catalyses the reaction Release of an N-terminal amino acid, Xaa-|-Yaa-, in which Xaa is preferably Leu, but may be other amino acids including Pro although not Arg or Lys, and Yaa may be Pro. Amino acid amides and methyl esters are also readily hydrolyzed, but rates on arylamides are exceedingly low.. The catalysed reaction is Release of an N-terminal amino acid, preferentially leucine, but not glutamic or aspartic acids.. Presumably involved in the processing and regular turnover of intracellular proteins. Catalyzes the removal of unsubstituted N-terminal amino acids from various peptides. The sequence is that of Probable cytosol aminopeptidase from Geobacillus sp. (strain WCH70).